The chain runs to 719 residues: Polyribonucleotide nucleotidyltransferase (719 aa).

Positions 495 and 501 each coordinate Mg(2+). One can recognise a KH domain in the interval 562–621; it reads PRRLSFRIDPELIGTVIGPGGRTIKGITERTNTKIDIEDTGIVTVASHDGAAAEEAQKII. An S1 motif domain is found at 631 to 699; the sequence is GEYFDGKVTR…NRGRINLTLR (69 aa). Residues 699–719 are disordered; sequence RGVPQDGSDPQPTVILPIGES.

Belongs to the polyribonucleotide nucleotidyltransferase family. The cofactor is Mg(2+).

It localises to the cytoplasm. It carries out the reaction RNA(n+1) + phosphate = RNA(n) + a ribonucleoside 5'-diphosphate. Involved in mRNA degradation. Catalyzes the phosphorolysis of single-stranded polyribonucleotides processively in the 3'- to 5'-direction. The protein is Polyribonucleotide nucleotidyltransferase of Synechococcus sp. (strain RCC307).